A 172-amino-acid chain; its full sequence is Large ribosomal subunit protein uL16 (172 aa).

The protein belongs to the universal ribosomal protein uL16 family.

The polypeptide is Large ribosomal subunit protein uL16 (Methanocella arvoryzae (strain DSM 22066 / NBRC 105507 / MRE50)).